The sequence spans 541 residues: 2-hydroxyacylsphingosine 1-beta-galactosyltransferase (541 aa).

The signal sequence occupies residues 1–20 (MKSYTPYFILLWSAVGIAKA). Residues Asn78, Asn333, and Asn442 are each glycosylated (N-linked (GlcNAc...) asparagine). Residues 472-492 (YFLLDIAFVLLLGAALLYFLL) form a helical membrane-spanning segment.

The protein belongs to the UDP-glycosyltransferase family.

The protein localises to the membrane. The protein resides in the endoplasmic reticulum. It catalyses the reaction an N-acylsphing-4-enine + UDP-alpha-D-galactose = a beta-D-galactosyl-(1&lt;-&gt;1')-N-acylsphing-4-enine + UDP + H(+). The enzyme catalyses an N-acyl-sphingoid base + UDP-alpha-D-galactose = a D-galactosylceramide + UDP + H(+). It carries out the reaction N-(2-hydroxy-hexanoyl)-sphing-4-enine + UDP-alpha-D-galactose = N-(2-hydroxy-hexanoyl)-beta-D-galactosyl-sphing-4-enine + UDP + H(+). The catalysed reaction is N-(2-hydroxy-hexanoyl)-sphinganine + UDP-alpha-D-galactose = N-(2-hydroxyhexanoyl)-beta-D-galactosylsphinganine + UDP + H(+). It participates in sphingolipid metabolism; galactosylceramide biosynthesis. Its function is as follows. Catalyzes the transfer of galactose to ceramide, a key enzymatic step in the biosynthesis of galactocerebrosides, which are abundant sphingolipids of the myelin membrane of the central nervous system and peripheral nervous system. Galactosylates both hydroxy- and non-hydroxy fatty acid-containing ceramides and diglycerides. This chain is 2-hydroxyacylsphingosine 1-beta-galactosyltransferase, found in Homo sapiens (Human).